A 414-amino-acid chain; its full sequence is Imidazolonepropionase (414 aa).

Residues 1 to 20 are compositionally biased toward polar residues; that stretch reads MSHQLFRNTRIYSPMDSGQP. The tract at residues 1–26 is disordered; it reads MSHQLFRNTRIYSPMDSGQPSAGKAQ. Residues H81 and H83 each contribute to the Fe(3+) site. The Zn(2+) site is built by H81 and H83. 4-imidazolone-5-propanoate-binding residues include R90, Y153, and H186. Y153 serves as a coordination point for N-formimidoyl-L-glutamate. H251 serves as a coordination point for Fe(3+). H251 serves as a coordination point for Zn(2+). E254 is a binding site for 4-imidazolone-5-propanoate. Position 325 (D325) interacts with Fe(3+). D325 serves as a coordination point for Zn(2+). Residues N327 and G329 each coordinate N-formimidoyl-L-glutamate. S330 contacts 4-imidazolone-5-propanoate.

Belongs to the metallo-dependent hydrolases superfamily. HutI family. It depends on Zn(2+) as a cofactor. Fe(3+) serves as cofactor.

It localises to the cytoplasm. The enzyme catalyses 4-imidazolone-5-propanoate + H2O = N-formimidoyl-L-glutamate. The protein operates within amino-acid degradation; L-histidine degradation into L-glutamate; N-formimidoyl-L-glutamate from L-histidine: step 3/3. Functionally, catalyzes the hydrolytic cleavage of the carbon-nitrogen bond in imidazolone-5-propanoate to yield N-formimidoyl-L-glutamate. It is the third step in the universal histidine degradation pathway. The polypeptide is Imidazolonepropionase (Desulfotalea psychrophila (strain LSv54 / DSM 12343)).